We begin with the raw amino-acid sequence, 361 residues long: Polygalacturonase (361 aa).

A signal peptide spans 1-18 (MISANSLLISTLCAFAIA). Cysteine 27 and cysteine 43 form a disulfide bridge. 5 PbH1 repeats span residues 155 to 185 (CSDL…DVGS), 186 to 207 (SSNV…AVNS), 208 to 228 (GSTI…SVGS), 237 to 258 (VNGF…RIKT), and 266 to 288 (VTNV…VIEG). Aspartate 200 (proton donor) is an active-site residue. The cysteines at positions 202 and 218 are disulfide-linked. Histidine 222 is an active-site residue. 2 N-linked (GlcNAc...) asparagine glycosylation sites follow: asparagine 318 and asparagine 330. A disulfide bond links cysteine 350 and cysteine 361.

The protein belongs to the glycosyl hydrolase 28 family.

It carries out the reaction (1,4-alpha-D-galacturonosyl)n+m + H2O = (1,4-alpha-D-galacturonosyl)n + (1,4-alpha-D-galacturonosyl)m.. The polypeptide is Polygalacturonase (PGU1) (Saccharomyces cerevisiae (strain ATCC 204508 / S288c) (Baker's yeast)).